The following is a 67-amino-acid chain: Large ribosomal subunit protein uL30 (67 aa).

Belongs to the universal ribosomal protein uL30 family. As to quaternary structure, part of the 50S ribosomal subunit.

The protein is Large ribosomal subunit protein uL30 of Thermotoga petrophila (strain ATCC BAA-488 / DSM 13995 / JCM 10881 / RKU-1).